Reading from the N-terminus, the 332-residue chain is CMRF35-like molecule 1 (332 aa).

The signal sequence occupies residues methionine 1–threonine 18. The Extracellular portion of the chain corresponds to alanine 19 to serine 181. Residues proline 22–serine 125 form the Ig-like V-type domain. 2 disulfide bridges follow: cysteine 41–cysteine 109 and cysteine 55–cysteine 63. Asparagine 89 is a glycosylation site (N-linked (GlcNAc...) asparagine). Residues valine 182–alanine 202 traverse the membrane as a helical segment. Residues tryptophan 203–proline 332 are Cytoplasmic-facing. Disordered stretches follow at residues proline 251 to glutamine 270 and proline 313 to proline 332.

Belongs to the CD300 family. Interacts with PTPN6/SHP-1 in a tyrosine phosphorylation dependent manner. Interacts with IL4R. Post-translationally, phosphorylated on tyrosine.

Its subcellular location is the cell membrane. Functionally, acts as an inhibitory receptor for myeloid cells and mast cells. Positively regulates the phagocytosis of apoptotic cells (efferocytosis) via phosphatidylserine (PS) recognition; recognizes and binds PS as a ligand which is expressed on the surface of apoptotic cells. Plays an important role in the maintenance of immune homeostasis, by promoting macrophage-mediated efferocytosis and by inhibiting dendritic cell-mediated efferocytosis. Negatively regulates Fc epsilon receptor-dependent mast cell activation and allergic responses via binding to ceramide and sphingomyelin which act as ligands. May act as a coreceptor for interleukin 4 (IL-4). Associates with and regulates IL-4 receptor alpha-mediated responses by augmenting IL-4- and IL-13-induced signaling. Negatively regulates the Toll-like receptor (TLR) signaling mediated by MYD88 and TRIF through activation of PTPN6/SHP-1 and PTPN11/SHP-2. Inhibits osteoclast formation. Induces macrophage cell death upon engagement. The protein is CMRF35-like molecule 1 (Cd300lf) of Rattus norvegicus (Rat).